Consider the following 101-residue polypeptide: Large ribosomal subunit protein eL21 (101 aa).

A compositionally biased stretch (basic residues) spans 1–18 (MVKHSRGYRTRSRSLLRK). A disordered region spans residues 1-23 (MVKHSRGYRTRSRSLLRKSPRER).

The protein belongs to the eukaryotic ribosomal protein eL21 family.

The sequence is that of Large ribosomal subunit protein eL21 from Saccharolobus islandicus (strain Y.G.57.14 / Yellowstone #1) (Sulfolobus islandicus).